The primary structure comprises 604 residues: Elongation factor 4 (604 aa).

In terms of domain architecture, tr-type G spans 10-191 (KNIRNFSIIA…KIITTIPAPS (182 aa)). GTP is bound by residues 22–27 (DHGKST) and 138–141 (NKID).

The protein belongs to the TRAFAC class translation factor GTPase superfamily. Classic translation factor GTPase family. LepA subfamily.

Its subcellular location is the cell inner membrane. The catalysed reaction is GTP + H2O = GDP + phosphate + H(+). Its function is as follows. Required for accurate and efficient protein synthesis under certain stress conditions. May act as a fidelity factor of the translation reaction, by catalyzing a one-codon backward translocation of tRNAs on improperly translocated ribosomes. Back-translocation proceeds from a post-translocation (POST) complex to a pre-translocation (PRE) complex, thus giving elongation factor G a second chance to translocate the tRNAs correctly. Binds to ribosomes in a GTP-dependent manner. The polypeptide is Elongation factor 4 (Helicobacter acinonychis (strain Sheeba)).